The sequence spans 553 residues: Methyl-coenzyme M reductase II subunit alpha (553 aa).

Residue glutamine 150 participates in coenzyme F430 binding. Coenzyme B is bound by residues arginine 228, 259–260, and arginine 273; that span reads KH. Pros-methylhistidine is present on histidine 260. Position 274 is a 5-methylarginine (arginine 274). Residue tyrosine 335 coordinates coenzyme M. 2-methylglutamine is present on glutamine 402. Position 446 (tyrosine 446) interacts with coenzyme M. Glycine 447 is modified (1-thioglycine). A (Z)-2,3-didehydroaspartate modification is found at aspartate 452. The residue at position 454 (cysteine 454) is an S-methylcysteine.

This sequence belongs to the methyl-coenzyme M reductase alpha subunit family. In terms of assembly, MCR is a hexamer of two alpha, two beta, and two gamma chains, forming a dimer of heterotrimers. Coenzyme F430 serves as cofactor. In terms of processing, the alpha subunit contains six modified amino acids near the active site region. Is methylated on His-260, Arg-274, Gln-402 and Cys-454, probably by the action of specific S-adenosylmethionine-dependent methyltransferases. Also contains a thioglycine at position 447, forming a thiopeptide bond. Contains a didehydroaspartate residue at position 452. The methylation on C5 of Arg-274 is a post-translational methylation not essential in vivo, but which plays a role for the stability and structural integrity of MCR.

The enzyme catalyses coenzyme B + methyl-coenzyme M = methane + coenzyme M-coenzyme B heterodisulfide. It functions in the pathway one-carbon metabolism; methyl-coenzyme M reduction; methane from methyl-coenzyme M: step 1/1. Component of the methyl-coenzyme M reductase (MCR) I that catalyzes the reductive cleavage of methyl-coenzyme M (CoM-S-CH3 or 2-(methylthio)ethanesulfonate) using coenzyme B (CoB or 7-mercaptoheptanoylthreonine phosphate) as reductant which results in the production of methane and the mixed heterodisulfide of CoB and CoM (CoM-S-S-CoB). This is the final step in methanogenesis. The chain is Methyl-coenzyme M reductase II subunit alpha (mrtA) from Methanothermobacter marburgensis (strain ATCC BAA-927 / DSM 2133 / JCM 14651 / NBRC 100331 / OCM 82 / Marburg) (Methanobacterium thermoautotrophicum).